The sequence spans 402 residues: Diaminopimelate decarboxylase (402 aa).

Lysine 61 carries the post-translational modification N6-(pyridoxal phosphate)lysine. Residues glycine 233 and 269–272 (EPGR) each bind pyridoxal 5'-phosphate. Positions 272, 304, 308, 334, and 360 each coordinate substrate. A pyridoxal 5'-phosphate-binding site is contributed by tyrosine 360.

This sequence belongs to the Orn/Lys/Arg decarboxylase class-II family. LysA subfamily. Homodimer. Pyridoxal 5'-phosphate is required as a cofactor.

The catalysed reaction is meso-2,6-diaminopimelate + H(+) = L-lysine + CO2. Its pathway is amino-acid biosynthesis; L-lysine biosynthesis via DAP pathway; L-lysine from DL-2,6-diaminopimelate: step 1/1. Its function is as follows. Specifically catalyzes the decarboxylation of meso-diaminopimelate (meso-DAP) to L-lysine. This chain is Diaminopimelate decarboxylase, found in Thermoplasma acidophilum (strain ATCC 25905 / DSM 1728 / JCM 9062 / NBRC 15155 / AMRC-C165).